The sequence spans 142 residues: Hemoglobin subunit alpha-A (142 aa).

One can recognise a Globin domain in the interval 2 to 142 (VLSANDKTNV…VGNVLTAKYR (141 aa)). Position 59 (His-59) interacts with O2. His-88 contacts heme b.

Belongs to the globin family. Heterotetramer of two alpha chains and two beta chains. In terms of tissue distribution, red blood cells.

Involved in oxygen transport from the lung to the various peripheral tissues. The chain is Hemoglobin subunit alpha-A (HBAA) from Aegypius monachus (Cinereous vulture).